The primary structure comprises 1101 residues: Type VI secretion system component TssM1 (1101 aa).

A helical membrane pass occupies residues 371 to 391; sequence LTIGALSATALVVLAVTAVWI.

It localises to the cell inner membrane. Functionally, core component of the type VI (T6SS) secretion system that plays a role in the release of toxins targeting both eukaryotic and prokaryotic species. Plays an essential role in stabilization of assembled TssK1 structure at a fixed perimembrane site. This chain is Type VI secretion system component TssM1, found in Pseudomonas aeruginosa (strain ATCC 15692 / DSM 22644 / CIP 104116 / JCM 14847 / LMG 12228 / 1C / PRS 101 / PAO1).